A 401-amino-acid polypeptide reads, in one-letter code: Enolase (401 aa).

A (2R)-2-phosphoglycerate-binding site is contributed by Gln154. The active-site Proton donor is Glu196. Residues Asp232, Glu275, and Asp302 each contribute to the Mg(2+) site. (2R)-2-phosphoglycerate-binding residues include Lys327, Arg356, Ser357, and Lys378. Lys327 functions as the Proton acceptor in the catalytic mechanism.

The protein belongs to the enolase family. Mg(2+) is required as a cofactor.

It is found in the cytoplasm. The protein localises to the secreted. It localises to the cell surface. The enzyme catalyses (2R)-2-phosphoglycerate = phosphoenolpyruvate + H2O. The protein operates within carbohydrate degradation; glycolysis; pyruvate from D-glyceraldehyde 3-phosphate: step 4/5. In terms of biological role, catalyzes the reversible conversion of 2-phosphoglycerate (2-PG) into phosphoenolpyruvate (PEP). It is essential for the degradation of carbohydrates via glycolysis. In Haloquadratum walsbyi (strain DSM 16790 / HBSQ001), this protein is Enolase.